A 147-amino-acid polypeptide reads, in one-letter code: Diuretic hormone 45 (147 aa).

The first 26 residues, 1–26 (MMWWAVWCAAMVAGSVFTAAAPPTDS), serve as a signal peptide directing secretion. A propeptide spanning residues 27-84 (IDLMQMDPSLADDESLGFAMQSLSGRYAAAPWLYLLADVSHDPQRMAEFSQSSGRARP) is cleaved from the precursor. At V131 the chain carries Valine amide. Residues 135–147 (GAWGEPASYLYNN) constitute a propeptide that is removed on maturation.

It belongs to the sauvagine/corticotropin-releasing factor/urotensin I family.

Its subcellular location is the secreted. Functionally, regulation of fluid secretion. This is Diuretic hormone 45 (dh45) from Bombyx mori (Silk moth).